A 493-amino-acid chain; its full sequence is Cobyric acid synthase (493 aa).

The region spanning 261-455 is the GATase cobBQ-type domain; sequence HTRIAVVAYP…LHGLFEDAAV (195 aa). The active-site Nucleophile is C342. Residue H447 is part of the active site.

It belongs to the CobB/CobQ family. CobQ subfamily.

The protein operates within cofactor biosynthesis; adenosylcobalamin biosynthesis. Its function is as follows. Catalyzes amidations at positions B, D, E, and G on adenosylcobyrinic A,C-diamide. NH(2) groups are provided by glutamine, and one molecule of ATP is hydrogenolyzed for each amidation. The chain is Cobyric acid synthase from Acidovorax sp. (strain JS42).